A 699-amino-acid polypeptide reads, in one-letter code: MDNEEVNEECMRLFFKNARAHLDKHLTSRLTCDENAYITFRCFLDGIHRKSTRFLEELLLKQENMYHNNNYERINDSVIPLVLKLLWLQIHEPTLQWFEHWFHDIMRLSNRRKFRVFRIFQKKMIQFFKITHRYYYDIIEHLCAKYDMNSVISNALFAKLNLMQYTDGLSTHEKIILNTSNPLTFSIVISLQRCVINLGSTHFYKTLLNKPSNKPKSVEGFEKSIRYLNIASLYLPAVGDTYFQRAKIYLITGKFSLYFFELVRGALVRIPSKCALNNLKDFILTPDFPERRRLMKKLAILVSKDLKGEKSFFEGQIVLQFLSIVEHTLVPQSWNASRASNCWLLKEHLQMAALKYHSGNINVILENLAATMGSFDLMFTTRKSKEQKNKLKYADLSERQVFFLDLSFDFIANIIDVVIKPSWQKNMEDFRYLAIIRLLMCWIKSYRSILQYTHRHRKFCTSFALLLNDLINSPLNCSGNIYSHRPKRSYLFREDIIFREFSCINFALTDFNDDYVYDSPDMINNIIGCPTLTKVLSPKEECVLRIRSIIFSGMKFLEKNDTGVIWNASKYKFDLISPNIKIKRQIALSEISSKINVKTQQERVVSSRKVEAKRDEQQRKRAGKIAVTELEKQFANVRRTKKLSPLPEKDGVSSELVKHAASRGRKTITGPLSSDFLSYPDEAIDADEDITVQVPDTPT.

Positions 641–663 (KKLSPLPEKDGVSSELVKHAASR) are disordered. The segment covering 647-658 (PEKDGVSSELVK) has biased composition (basic and acidic residues).

This sequence belongs to the EST1 family. In terms of assembly, interacts with CDC13 and MPS3.

It is found in the nucleus. Its subcellular location is the chromosome. The protein resides in the telomere. In terms of biological role, directly involved in telomere replication. Associates with telomerase and during its interaction with CDC13, telomerase activity is promoted. The chain is Telomere elongation protein EST1 (EST1) from Saccharomyces cerevisiae (strain ATCC 204508 / S288c) (Baker's yeast).